A 79-amino-acid polypeptide reads, in one-letter code: Putative Fis-like DNA-binding protein (79 aa).

Residues 55 to 74 (QSKASVMLGLNRNTLRKKLI) constitute a DNA-binding region (H-T-H motif).

It belongs to the transcriptional regulatory Fis family.

The polypeptide is Putative Fis-like DNA-binding protein (Neisseria meningitidis serogroup A / serotype 4A (strain DSM 15465 / Z2491)).